We begin with the raw amino-acid sequence, 2090 residues long: Host cell factor 1 (2090 aa).

A2 is modified (N-acetylalanine). A Phosphoserine modification is found at S6. Kelch repeat units lie at residues 44–89 (LIVV…GFVC), 93–140 (RLLV…RLGH), 148–194 (KCYL…ITYG), 217–265 (KLVI…TIGN), and 266–313 (KMYV…LMDT). Residues K105, K163, and K244 each participate in a glycyl lysine isopeptide (Lys-Gly) (interchain with G-Cter in ubiquitin) cross-link. K282 participates in a covalent cross-link: Glycyl lysine isopeptide (Lys-Gly) (interchain with G-Cter in SUMO2). The residue at position 288 (K288) is an N6-acetyllysine. A Glycyl lysine isopeptide (Lys-Gly) (interchain with G-Cter in ubiquitin) cross-link involves residue K363. Residues 366-469 (PPARVQLVRA…TIQVLPTVPG (104 aa)) form the Fibronectin type-III 1 domain. A disordered region spans residues 407–434 (ATATSPTPNPVPSVPANPPKSPAPAAAA). S411 carries the phosphoserine modification. Residues 413–428 (TPNPVPSVPANPPKSP) show a composition bias toward pro residues. The interval 500 to 550 (LVTMRPAGQAGKAPVTVTSLPASVRMVVPTQSAQGTVIGSNPQMSGMAALA) is required for interaction with OGT. R504 and R524 each carry omega-N-methylarginine. A phosphoserine mark is found at S598, S666, and S669. The tract at residues 610-722 (LKTAAAQVGT…KGPLPAGTIL (113 aa)) is interaction with SIN3A. Residues 750-902 (ILGISSVSPS…SLAGAGAHST (153 aa)) are interaction with ZBTB17. K813 is subject to N6-acetyllysine. The segment at 813–912 (KIITAVPKIA…SASLATPITT (100 aa)) is interaction with GABP2. HCF repeat repeat units follow at residues 1010–1035 (TLVC…TVVA), 1072–1097 (VRVC…ATSN), and 1101–1126 (QHGC…AMSS). The disordered stretch occupies residues 1098–1140 (MAGQHGCSNPPCETHETGTTSTATTAMSSMGTGQQRDTRHTSS). Low complexity predominate over residues 1114-1130 (TGTTSTATTAMSSMGTG). Residues 1157-1182 (TQGTVKPQCQTQQANMTNTTMTVQAT) form an HCF repeat 4; degenerate repeat. Residue S1204 is modified to Phosphoserine. R1216 is subject to Asymmetric dimethylarginine. Residue S1223 is modified to Phosphoserine. HCF repeat repeat units lie at residues 1295-1320 (TQVC…SNAG) and 1323-1348 (QRVC…ATSN). Disordered stretches follow at residues 1302–1374 (PCET…TTST) and 1444–1486 (TVTS…TTVS). Residues 1308–1321 (TGTTNTATTSNAGS) show a composition bias toward low complexity. Residues 1358 to 1383 (QQPAGGRPCETHQTTSTGTTMSVSVG) form an HCF repeat 7; degenerate repeat. One copy of the HCF repeat 8 repeat lies at 1423-1448 (QRVCSNPPCETHETGTTHTATTVTSN). Polar residues predominate over residues 1465-1475 (VVSTQGDSANI). The span at 1476-1486 (TSSSGITTTVS) shows a compositional bias: low complexity. T1500 carries the post-translational modification Phosphothreonine. Phosphoserine is present on residues S1506, S1559, and S1826. 2 consecutive Fibronectin type-III domains span residues 1853–1943 (PPPP…TCLP) and 1945–2061 (FPGA…TSKD). Glycyl lysine isopeptide (Lys-Gly) (interchain with G-Cter in ubiquitin) cross-links involve residues K1862 and K1863. Residue S1893 is modified to Phosphoserine. The disordered stretch occupies residues 2049 to 2090 (ATQVRWLQETSKDSSGTKPASKRPMSSPEMKSAPKKSKADGQ). K2060 bears the N6-acetyllysine mark. Residue K2079 forms a Glycyl lysine isopeptide (Lys-Gly) (interchain with G-Cter in SUMO2) linkage.

Composed predominantly of six polypeptides ranging from 110 to 150 kDa and a minor 300 kDa polypeptide. The majority of N- and C-terminal cleavage products remain tightly, albeit non-covalently, associated. Interacts with POU2F1, CREB3, ZBTB17, EGR2, E2F4, CREBZF, SP1, GABP2, Sin3 HDAC complex (SIN3A, HDAC1, HDAC2, SUDS3), SAP30, SIN3B and FHL2. Component of a MLL1 complex, composed of at least the core components KMT2A/MLL1, ASH2L, HCFC1, WDR5 and RBBP5, as well as the facultative components BACC1, CHD8, DPY30, E2F6, HCFC2, HSP70, INO80C, KANSL1, LAS1L, MAX, MCRS1, MEN1, MGA, KAT8, PELP1, PHF20, PRP31, RING2, RUVBL1, RUVBL2, SENP3, TAF1, TAF4, TAF6, TAF7, TAF9 and TEX10. Component of a THAP1/THAP3-HCFC1-OGT complex that is required for the regulation of the transcriptional activity of RRM1. Interacts directly with THAP3 (via its HBM). Interacts (via the Kelch-repeat domain) with THAP1 (via the HBM); the interaction recruits HCHC1 to the RRM1. Interacts directly with OGT; the interaction, which requires the HCFC1 cleavage site domain, glycosylates and promotes the proteolytic processing of HCFC1 and retains OGT in the nucleus. Component of the SET1 complex, at least composed of the catalytic subunit (SETD1A or SETD1B), WDR5, WDR82, RBBP5, ASH2L, CXXC1, HCFC1 and DPY30. Component of the NSL complex at least composed of MOF/KAT8, KANSL1, KANSL2, KANSL3, MCRS1, PHF20, OGT1/OGT, WDR5 and HCFC1. Component of a complex at least composed of ZNF335, HCFC1, CCAR2, EMSY, MKI67, RBBP5, ASH2L and WDR5; the complex is formed as a result of interactions between components of a nuclear receptor-mediated transcription complex and a histone methylation complex. Within the complex interacts with ZNF335. Interacts with TET2 and TET3. Interacts with HCFC1R1. Interacts with THAP11. Interacts (via Kelch domain) with KMT2E (via HBM motif). Interacts with E2F1. Accessory scaffold component of the polycomb repressive deubiquitinase (PR-DUB) complex, at least composed of BAP1, one of ASXL1, ASXL2 or (probably) ASXL3 and one of MBD5 or MBD6; the PR-DUB core associates with a number of accessory proteins, including FOXK1, FOXK2, KDM1B, HCFC1, YY1 and OGT. Interacts with YY1 (via Gly-rich region); the interaction is direct. Interacts with BAP1 (via HBM-like motif). Proteolytically cleaved at one or several PPCE--THET sites within the HCF repeats. Cleavage is promoted by O-glycosylation. Further cleavage of the primary N- and C-terminal chains results in a 'trimming' and accumulation of the smaller chains. Cleavage is promoted by O-glycosylation. Post-translationally, O-glycosylated. GlcNAcylation by OGT promotes proteolytic processing. In terms of processing, ubiquitinated. Lys-1862 and Lys-1863 are ubiquitinated both via 'Lys-48'- and 'Lys-63'-linked polyubiquitin chains. BAP1 mediated deubiquitination of 'Lys-48'-linked polyubiquitin chains; deubiquitination by BAP1 does not seem to stabilize the protein.

The protein resides in the cytoplasm. It is found in the nucleus. In terms of biological role, transcriptional coregulator. Serves as a scaffold protein, bridging interactions between transcription factors, including THAP11 and ZNF143, and transcriptional coregulators. Involved in control of the cell cycle. Also antagonizes transactivation by ZBTB17 and GABP2; represses ZBTB17 activation of the p15(INK4b) promoter and inhibits its ability to recruit p300. Coactivator for EGR2 and GABP2. Tethers the chromatin modifying Set1/Ash2 histone H3 'Lys-4' methyltransferase (H3K4me) and Sin3 histone deacetylase (HDAC) complexes (involved in the activation and repression of transcription respectively) together. As part of the NSL complex it may be involved in acetylation of nucleosomal histone H4 on several lysine residues. Recruits KMT2E to E2F1 responsive promoters promoting transcriptional activation and thereby facilitates G1 to S phase transition. Modulates expression of homeobox protein PDX1, perhaps acting in concert with transcription factor E2F1, thereby regulating pancreatic beta-cell growth and glucose-stimulated insulin secretion. May negatively modulate transcriptional activity of FOXO3. This is Host cell factor 1 from Mesocricetus auratus (Golden hamster).